A 308-amino-acid chain; its full sequence is MARAMDNAILETILQRVRPLIGQGKVADYIPALASVEGSKLGIAICTVDGQHYQAGDAHERFSIQSISKVLSLVVAMRHYPEEEIWQRVGKDPSGSPFNSLVQLEMEQGIPRNPFINAGALVVCDMLQGRLSAPRQRMLEVVRALCGVSDITYDVTVARSEFEHSARNAAIAWLMKSFGNFHHDVPTVLQNYFHYCALKMSCMELARTFVFLANQGEAFHLDEPVVTPMQARQINALMATSGMYQNAGEFAWRVGLPAKSGVGGGIVAIVPHEMAIAVWSPELDPAGNSLAGIAALEQLTQTLGRSVY.

The substrate site is built by Ser66, Asn117, Glu161, Asn168, Tyr192, Tyr244, and Val262.

The protein belongs to the glutaminase family. Homotetramer.

The catalysed reaction is L-glutamine + H2O = L-glutamate + NH4(+). The protein is Glutaminase of Salmonella agona (strain SL483).